A 401-amino-acid chain; its full sequence is Multidrug resistance protein MdtH (401 aa).

11 helical membrane-spanning segments follow: residues 13–33 (YFLLLDNLLVVLGFFIVFPLI), 34–54 (SIRFVDQLGWAAVLVGLALGL), 99–116 (PWILWLACALSGLGGTLF), 139–159 (LLMMQDSAGAVIGALIGSWLL), 165–185 (FVCWTGAVIFILAAGWNVWLL), 214–234 (VLTLTGYYMLSVQVMLMLPIV), 243–263 (AAVKWMYAIEAALSLTLLYPI), 277–297 (LMFGLLIMTLSLFPVGLITHL), 299–319 (TLFMFICFFYMGSIIAEPARE), 340–360 (LGLALGGALGYTGGGWMYDTG), and 368–388 (LPWFLLGVIGLITLVGLYWQF).

Belongs to the major facilitator superfamily. DHA1 family. MdtH (TC 2.A.1.2.21) subfamily.

The protein localises to the cell inner membrane. This is Multidrug resistance protein MdtH from Yersinia enterocolitica serotype O:8 / biotype 1B (strain NCTC 13174 / 8081).